The following is a 397-amino-acid chain: GPI mannosyltransferase 1 (397 aa).

9 consecutive transmembrane segments (helical) span residues 5-25, 79-99, 111-128, 156-176, 193-213, 257-277, 307-327, 330-350, and 362-382; these read ECLL…YGIY, WVHF…VMVM, LILA…TVST, GFVY…ALPI, LTMG…MYYI, WAEF…YVLW, YFIW…LSGA, IFLI…GYLL, and LFSA…QFIL.

It belongs to the PIGM family.

It is found in the endoplasmic reticulum membrane. It functions in the pathway glycolipid biosynthesis; glycosylphosphatidylinositol-anchor biosynthesis. Functionally, mannosyltransferase involved in glycosylphosphatidylinositol-anchor biosynthesis. Transfers the first alpha-1,4-mannose to GlcN-acyl-PI during GPI precursor assembly. Required for cell wall integrity. This is GPI mannosyltransferase 1 (GPI14) from Eremothecium gossypii (strain ATCC 10895 / CBS 109.51 / FGSC 9923 / NRRL Y-1056) (Yeast).